The sequence spans 239 residues: Cysteine-rich venom protein (239 aa).

The first 19 residues, 1–19, serve as a signal peptide directing secretion; that stretch reads MIAFLVLPILAAVLQQSSG. Residues 39-166 enclose the SCP domain; that stretch reads DLHNSLRRSV…EYKYFYVCQY (128 aa). Disulfide bonds link C75/C153, C92/C167, C148/C164, C186/C193, C189/C198, C202/C234, C211/C228, and C219/C232. In terms of domain architecture, ShKT spans 202–234; that stretch reads CTHEDKFTNCKDLVKQGCNNNYLKTNCPASCSC.

Belongs to the CRISP family. Expressed by the venom gland.

The protein localises to the secreted. Blocks contraction of smooth muscle elicited by high potassium-induced depolarization, but does not block caffeine-stimulated contraction. May target voltage-gated calcium channels in smooth muscle. This chain is Cysteine-rich venom protein, found in Vipera berus (Common European adder).